The primary structure comprises 347 residues: Metacaspase-2 (347 aa).

Residues 1–55 constitute a propeptide that is removed on maturation; it reads MCSLITQLCDAGQLADYVGLGWLNAVSSQPYLVQALGLQPPPRRVDVDAAFRDAK. Residues 1 to 70 are regulates substrate access to the active site; it reads MCSLITQLCD…QPWVATPLPG (70 aa). Residue histidine 158 is part of the active site. The Ca(2+) site is built by aspartate 173, aspartate 189, and aspartate 190. The active site involves cysteine 213. Residue aspartate 220 participates in Ca(2+) binding.

The protein belongs to the peptidase C14B family. Monomer. In terms of processing, auto-proteolytic cleavage of the propeptide after Lys-55 and between the large and small subunits after Lys-268 is required for catalytic activity towards large protein substrates but is dispensable towards small oligopeptide substrates. After processing, the propeptide and the large and small subunits remain associated by non-covalent bonds. In vivo, the unprocessed enzyme appears to be the predominant form.

It is found in the recycling endosome. Activated by Ca(2+). In response to calcium binding, the 280-loop, a disordered loop consisting of residues 269-275, undergoes a conformational change which stabilizes substrates in the active site. The binding to the substrate triggers the release of the N-terminal region resulting in the activation of the enzyme. Proteolytic cleavage is required for catalytic activity towards large protein substrates. Functionally, cysteine protease that cleaves specifically after arginine or lysine residues. In Trypanosoma brucei brucei (strain 927/4 GUTat10.1), this protein is Metacaspase-2.